We begin with the raw amino-acid sequence, 401 residues long: Argininosuccinate synthase (401 aa).

Position 9–17 (9–17 (AYSGGLDTS)) interacts with ATP. L-citrulline is bound at residue Y88. G118 serves as a coordination point for ATP. L-aspartate is bound by residues T120, N124, and D125. N124 lines the L-citrulline pocket. 5 residues coordinate L-citrulline: R128, S176, S185, E261, and Y273.

The protein belongs to the argininosuccinate synthase family. Type 1 subfamily. In terms of assembly, homotetramer.

The protein resides in the cytoplasm. The catalysed reaction is L-citrulline + L-aspartate + ATP = 2-(N(omega)-L-arginino)succinate + AMP + diphosphate + H(+). The protein operates within amino-acid biosynthesis; L-arginine biosynthesis; L-arginine from L-ornithine and carbamoyl phosphate: step 2/3. The sequence is that of Argininosuccinate synthase from Symbiobacterium thermophilum (strain DSM 24528 / JCM 14929 / IAM 14863 / T).